A 70-amino-acid chain; its full sequence is DNA-directed RNA polymerase subunit omega (70 aa).

It belongs to the RNA polymerase subunit omega family. As to quaternary structure, the RNAP catalytic core consists of 2 alpha, 1 beta, 1 beta' and 1 omega subunit. When a sigma factor is associated with the core the holoenzyme is formed, which can initiate transcription.

It carries out the reaction RNA(n) + a ribonucleoside 5'-triphosphate = RNA(n+1) + diphosphate. Functionally, promotes RNA polymerase assembly. Latches the N- and C-terminal regions of the beta' subunit thereby facilitating its interaction with the beta and alpha subunits. This Bacillus cytotoxicus (strain DSM 22905 / CIP 110041 / 391-98 / NVH 391-98) protein is DNA-directed RNA polymerase subunit omega.